We begin with the raw amino-acid sequence, 1499 residues long: Tyrosine-protein phosphatase non-receptor type 23 (1499 aa).

The 219-residue stretch at 1–219 (LNVNLMLGQA…AKIEDKNEVL (219 aa)) folds into the BRO1 domain. 2 TPR repeats span residues 75–108 (AVAH…LNEA) and 199–232 (EEKA…DPDT). 3 coiled-coil regions span residues 278 to 305 (EASL…LGQA), 377 to 464 (KAVL…NVQY), and 506 to 537 (YADL…LLDR). Disordered regions lie at residues 536 to 583 (DREL…MMAG) and 718 to 1006 (HMAL…LLQP). The segment at 598 to 993 (HFSPGPFPGS…SSSPESQHGG (396 aa)) is his. Over residues 724-752 (GPAPAPPQPCFPVPQPVPQSVPQPQPLPT) the composition is skewed to pro residues. Over residues 754 to 763 (YTYSIGTKQH) the composition is skewed to polar residues. Arginine 785 is subject to Omega-N-methylarginine. Composition is skewed to pro residues over residues 785–827 (RIGP…PQPQ), 856–866 (LTPPPPYPFTP), 900–909 (FPSPGPPHPH), and 934–972 (GPPP…PPPC). 20 repeat units span residues 788–789 (PQ), 790–791 (PP), 792–793 (PQ), 794–795 (LQ), 796–797 (PQ), 798–799 (PQ), 800–801 (PQ), 802–803 (PQ), 804–805 (PQ), 806–807 (PP), 808–809 (PQ), 810–811 (PQ), 812–813 (PQ), 814–815 (PQ), 816–817 (PQ), 818–819 (PQ), 820–821 (PQ), 822–823 (PQ), 824–825 (PQ), and 826–827 (PQ). A 20 X 2 AA approximate tandem repeats of P-Q region spans residues 788 to 827 (PQPPPQLQPQPQPQPQPQPPPQPQPQPQPQPQPQPQPQPQ). 2 positions are modified to phosphoserine: serine 985 and serine 986. Position 994 is a phosphothreonine (threonine 994). The region spanning 1055 to 1315 (DAVWRELQEA…KFCHEALVRH (261 aa)) is the Tyrosine-protein phosphatase domain. Cysteine 1255 acts as the Phosphocysteine intermediate in catalysis. Disordered stretches follow at residues 1322-1351 (RHGV…QDLV) and 1381-1499 (ASLP…LNKT). A compositionally biased stretch (polar residues) spans 1335–1348 (MSVSQKSHLPQDSQ). The span at 1390–1419 (PGLPPASLPEPTPAPPSSPPPPSSPLPEPP) shows a compositional bias: pro residues. Over residues 1427-1450 (VPEAPSLGPPSSSLELLASLTPEA) the composition is skewed to low complexity. Over residues 1464–1473 (SKQNFLQAHN) the composition is skewed to polar residues. Arginine 1478 is modified (omega-N-methylarginine). Positions 1482-1499 (PTDDPLSLLDPLWTLNKT) are enriched in low complexity.

Belongs to the protein-tyrosine phosphatase family. Non-receptor class subfamily. Interacts with GRAP2 and GRB2. Interacts with UBAP1 and CHMP4B. In terms of tissue distribution, ubiquitously expressed, with highest levels in brain, testis and kidney, and lowest levels in skeletal muscle.

It is found in the nucleus. The protein resides in the cytoplasm. Its subcellular location is the cytoplasmic vesicle. The protein localises to the endosome. It localises to the cytoskeleton. It is found in the cilium basal body. It carries out the reaction O-phospho-L-tyrosyl-[protein] + H2O = L-tyrosyl-[protein] + phosphate. In terms of biological role, plays a role in sorting of endocytic ubiquitinated cargos into multivesicular bodies (MVBs) via its interaction with the ESCRT-I complex (endosomal sorting complex required for transport I), and possibly also other ESCRT complexes. May act as a negative regulator of Ras-mediated mitogenic activity. Plays a role in ciliogenesis. The sequence is that of Tyrosine-protein phosphatase non-receptor type 23 (Ptpn23) from Rattus norvegicus (Rat).